The primary structure comprises 414 residues: MRRYSIFAVAREALRYHSGWEKAWASPEPKKRYDVIVVGAGGHGLATAYYLGKVHGIKNVAIIEKGWLGGGNTGRNTTIIRSNYLQDPSAAIYEKARSLYEGLSQDLNYNVMFSPRGLLMLAQSEHEMRGYKRTVYANNLQNVETRWIEPKEVKKLVPILNIAGPRYPVLGALLQEKGGTARHDAVAWGYARACSDMGMDLLQNTEVTGVRTEGGRVVGVDTSRGSIDCGKLAIVVAGHSSVLAGMAGFRLPIESMALQAWVSEPIKPTIDVVVMANLVHGYMSQSDKGELVIGGGTDGFNNYSQRGSWHHVEETTRALIETFPVISRLKMLRQWGGIVDMTGDRSPILSKTPVDGIFVNCGWGTGGFKAIPGSGFAMAELVAKGYSPLAAEFGLHRFKEGQFIDESVAAGVAH.

The FAD site is built by Gly-42, His-43, Glu-64, Asn-72, Thr-77, and Ile-79. At His-183 the chain carries Tele-8alpha-FMN histidine. Val-207, Gly-364, Gly-367, and Lys-369 together coordinate FAD.

The protein belongs to the SoxB family. As to quaternary structure, heterotetramer composed of subunits alpha (SoxA), beta (SoxB), gamma (SoxG) and delta (SoxD). FAD is required as a cofactor. It depends on FMN as a cofactor.

The protein localises to the cytoplasm. The catalysed reaction is sarcosine + (6S)-5,6,7,8-tetrahydrofolate + O2 = (6R)-5,10-methylene-5,6,7,8-tetrahydrofolate + glycine + H2O2. It catalyses the reaction sarcosine + O2 + H2O = formaldehyde + glycine + H2O2. Its function is as follows. In the presence of tetrahydrofolate, catalyzes the oxidative demethylation of sarcosine to yield glycine, 5,10-methylenetetrahydrofolate and hydrogen peroxide. In the absence of tetrahydrofolate, catalyzes the oxidative demethylation of sarcosine to yield glycine, formaldehyde and hydrogen peroxide. The polypeptide is Sarcosine oxidase subunit beta (soxB) (Rhodobacter capsulatus (strain ATCC BAA-309 / NBRC 16581 / SB1003)).